The sequence spans 121 residues: Iron-sulfur cluster assembly protein CyaY (121 aa).

It belongs to the frataxin family.

Its function is as follows. Involved in iron-sulfur (Fe-S) cluster assembly. May act as a regulator of Fe-S biogenesis. This is Iron-sulfur cluster assembly protein CyaY from Buchnera aphidicola subsp. Schizaphis graminum (strain Sg).